Consider the following 446-residue polypeptide: Tubulin beta chain (446 aa).

Residues glutamine 11, glutamate 69, serine 138, glycine 142, threonine 143, glycine 144, asparagine 204, and asparagine 226 each coordinate GTP. Glutamate 69 is a Mg(2+) binding site. The tract at residues glutamine 423–glutamate 446 is disordered. Residues glycine 429 to glutamate 446 are compositionally biased toward acidic residues.

It belongs to the tubulin family. As to quaternary structure, dimer of alpha and beta chains. A typical microtubule is a hollow water-filled tube with an outer diameter of 25 nm and an inner diameter of 15 nM. Alpha-beta heterodimers associate head-to-tail to form protofilaments running lengthwise along the microtubule wall with the beta-tubulin subunit facing the microtubule plus end conferring a structural polarity. Microtubules usually have 13 protofilaments but different protofilament numbers can be found in some organisms and specialized cells. Mg(2+) serves as cofactor.

The protein resides in the cytoplasm. The protein localises to the cytoskeleton. In terms of biological role, tubulin is the major constituent of microtubules, a cylinder consisting of laterally associated linear protofilaments composed of alpha- and beta-tubulin heterodimers. Microtubules grow by the addition of GTP-tubulin dimers to the microtubule end, where a stabilizing cap forms. Below the cap, tubulin dimers are in GDP-bound state, owing to GTPase activity of alpha-tubulin. This Pestalotiopsis microspora protein is Tubulin beta chain (TUBB).